Consider the following 505-residue polypeptide: Cytochrome P450 monooxygenase iliC (505 aa).

Residues 6–26 (LIAQHSLTLTIASSVLLVFLL) form a helical membrane-spanning segment. Heme is bound at residue cysteine 453.

The protein belongs to the cytochrome P450 family. Requires heme as cofactor.

The protein resides in the membrane. It carries out the reaction (3E,5S)-3-[(2E,4E,8S,10E,12Z)-1-hydroxy-4,8-dimethyltetradeca-2,4,10,12-tetraen-1-ylidene]-5-[(4-hydroxyphenyl)methyl]pyrrolidine-2,4-dione + reduced [NADPH--hemoprotein reductase] + O2 = 3-[(2E,4E,8S,10E,12Z)-4,8-dimethyltetradeca-2,4,10,12-tetraenoyl]-4-hydroxy-5-(4-hydroxyphenyl)-1,2-dihydropyridin-2-one + oxidized [NADPH--hemoprotein reductase] + 2 H2O. Its pathway is mycotoxin biosynthesis. In terms of biological role, cytochrome P450 monooxygenase; part of the gene cluster that mediates the biosynthesis of ilicicolin H, a 4-hydroxy-2-pyridonealkaloid that has potent and broad antifungal activities by inhibiting the mitochondrial respiration chain. IliC catalyzes the ring expansion of the tetramate intermediate to the acyclic 2-pyridone intermediate that contains the trans bis-diene chain. The biosynthesis of ilicicolin H starts with formation of the tetramic acid by the hybrid PKS-NRPS synthetase iliA with the partnering trans-enoyl reductase iliB since iliA lacks a designated enoylreductase (ER) domain. The cytochrome P450 monooxygenase iliC then catalyzes the ring expansion of the tetramate to the acyclic 2-pyridone. The pericyclase iliD further converts the acyclic 2-pyridone into 8-epi-ilicicolin H. 8-epi-ilicicolin H might then spontaneously convert to ilicicolin H since ilicicolin H is produced in the absence of the epimerase iliE, in contrast to what was observed for the Talaromyces variabilis ilicolin H biosynthetic pathway. The chain is Cytochrome P450 monooxygenase iliC from Neonectria sp. (strain DH2).